The chain runs to 337 residues: tRNA N6-adenosine threonylcarbamoyltransferase (337 aa).

Residues His-111 and His-115 each coordinate Fe cation. Residues Leu-134–Gly-138, Asp-167, Gly-180, and Asn-272 contribute to the substrate site. Asp-300 lines the Fe cation pocket.

It belongs to the KAE1 / TsaD family. It depends on Fe(2+) as a cofactor.

It is found in the cytoplasm. It catalyses the reaction L-threonylcarbamoyladenylate + adenosine(37) in tRNA = N(6)-L-threonylcarbamoyladenosine(37) in tRNA + AMP + H(+). In terms of biological role, required for the formation of a threonylcarbamoyl group on adenosine at position 37 (t(6)A37) in tRNAs that read codons beginning with adenine. Is involved in the transfer of the threonylcarbamoyl moiety of threonylcarbamoyl-AMP (TC-AMP) to the N6 group of A37, together with TsaE and TsaB. TsaD likely plays a direct catalytic role in this reaction. This chain is tRNA N6-adenosine threonylcarbamoyltransferase, found in Salmonella arizonae (strain ATCC BAA-731 / CDC346-86 / RSK2980).